The sequence spans 158 residues: SsrA-binding protein (158 aa).

The protein belongs to the SmpB family.

Its subcellular location is the cytoplasm. Required for rescue of stalled ribosomes mediated by trans-translation. Binds to transfer-messenger RNA (tmRNA), required for stable association of tmRNA with ribosomes. tmRNA and SmpB together mimic tRNA shape, replacing the anticodon stem-loop with SmpB. tmRNA is encoded by the ssrA gene; the 2 termini fold to resemble tRNA(Ala) and it encodes a 'tag peptide', a short internal open reading frame. During trans-translation Ala-aminoacylated tmRNA acts like a tRNA, entering the A-site of stalled ribosomes, displacing the stalled mRNA. The ribosome then switches to translate the ORF on the tmRNA; the nascent peptide is terminated with the 'tag peptide' encoded by the tmRNA and targeted for degradation. The ribosome is freed to recommence translation, which seems to be the essential function of trans-translation. The sequence is that of SsrA-binding protein from Caldanaerobacter subterraneus subsp. tengcongensis (strain DSM 15242 / JCM 11007 / NBRC 100824 / MB4) (Thermoanaerobacter tengcongensis).